Here is a 292-residue protein sequence, read N- to C-terminus: Elongation factor Ts (292 aa).

The interval T80–V83 is involved in Mg(2+) ion dislocation from EF-Tu.

This sequence belongs to the EF-Ts family.

The protein resides in the cytoplasm. Associates with the EF-Tu.GDP complex and induces the exchange of GDP to GTP. It remains bound to the aminoacyl-tRNA.EF-Tu.GTP complex up to the GTP hydrolysis stage on the ribosome. This chain is Elongation factor Ts, found in Tolumonas auensis (strain DSM 9187 / NBRC 110442 / TA 4).